A 506-amino-acid chain; its full sequence is Maturase K (506 aa).

The protein belongs to the intron maturase 2 family. MatK subfamily.

It is found in the plastid. The protein resides in the chloroplast. In terms of biological role, usually encoded in the trnK tRNA gene intron. Probably assists in splicing its own and other chloroplast group II introns. The chain is Maturase K from Trifolium resupinatum (Persian clover).